The following is a 78-amino-acid chain: Exodeoxyribonuclease 7 small subunit (78 aa).

This sequence belongs to the XseB family. In terms of assembly, heterooligomer composed of large and small subunits.

It is found in the cytoplasm. The catalysed reaction is Exonucleolytic cleavage in either 5'- to 3'- or 3'- to 5'-direction to yield nucleoside 5'-phosphates.. In terms of biological role, bidirectionally degrades single-stranded DNA into large acid-insoluble oligonucleotides, which are then degraded further into small acid-soluble oligonucleotides. The sequence is that of Exodeoxyribonuclease 7 small subunit from Finegoldia magna (strain ATCC 29328 / DSM 20472 / WAL 2508) (Peptostreptococcus magnus).